Here is a 445-residue protein sequence, read N- to C-terminus: Xylose isomerase (445 aa).

Residues His-107 and Asp-110 contribute to the active site. Glu-238, Glu-274, His-277, Asp-302, Asp-313, Asp-315, and Asp-345 together coordinate Mg(2+).

Belongs to the xylose isomerase family. Homotetramer. The cofactor is Mg(2+).

The protein resides in the cytoplasm. The catalysed reaction is alpha-D-xylose = alpha-D-xylulofuranose. This chain is Xylose isomerase (xylA), found in Priestia megaterium (strain DSM 319 / IMG 1521) (Bacillus megaterium).